The chain runs to 147 residues: Cyanate hydratase (147 aa).

Residues arginine 88, glutamate 91, and serine 114 contribute to the active site.

This sequence belongs to the cyanase family.

It catalyses the reaction cyanate + hydrogencarbonate + 3 H(+) = NH4(+) + 2 CO2. Its function is as follows. Catalyzes the reaction of cyanate with bicarbonate to produce ammonia and carbon dioxide. The polypeptide is Cyanate hydratase (Prochlorococcus marinus subsp. pastoris (strain CCMP1986 / NIES-2087 / MED4)).